The following is a 370-amino-acid chain: MSAAARVVAPVMMLSRFRGALVGSVLGDCIGGEFEGAVDVPLDRVLQHLSALEDDTRGDGILQYSDDTAMMRCVADSLLTRMTFDERDMAQRFAKEYSHSPGRGYGSGVVQVLRKLASPHLKDVFQPAQAQFGGRGSFGNGGAMRAVPFALAFRSRADVRKYSRFGAMLTHSCSLGYNGAALQALAVHLSLQGALALPKDFIDKLISEMEELEKDETAKHDAKALNLSEFPYCSRLHRVKELMDKTSVSIEEVISELGNGIAALQSVPTAIFCVLYCLEPQDGLPERFGGLERTIAYSLALGGDTDTIACMAGAIAGAHYGIDSIPLSWQVSCEGVDEADDLARRLYDLYCLPQHNEDRGNNQPHTTNTD.

Positions 35, 66, and 67 each coordinate Mg(2+). D66 serves as a coordination point for substrate. Residues 135 to 141 (RGSFGNG), H171, L225, and I261 each bind substrate. Mg(2+)-binding residues include D304, D306, and T307.

This sequence belongs to the ADP-ribosylglycohydrolase family. Monomer. Requires Mg(2+) as cofactor.

It localises to the nucleus. It is found in the cytoplasm. The protein resides in the chromosome. Its subcellular location is the mitochondrion matrix. It carries out the reaction [(1''-&gt;2')-ADP-alpha-D-ribose](n) + H2O = [(1''-&gt;2')-ADP-alpha-D-ribose](n-1) + ADP-D-ribose. The catalysed reaction is 1''-O-acetyl-ADP-alpha-D-ribose + H2O = ADP-D-ribose + acetate + H(+). It catalyses the reaction O-(ADP-D-ribosyl)-L-seryl-[protein] + H2O = ADP-D-ribose + L-seryl-[protein]. The enzyme catalyses alpha-NAD(+) + H2O = ADP-D-ribose + nicotinamide + H(+). Its activity is regulated as follows. The protein undergoes a dramatic conformational switch from closed to open states upon substrate-binding, which enables specific substrate recognition for the 1''-O-linkage. The glutamate flap (Glu-35) blocks substrate entrance to Mg(2+) in the unliganded closed state. In presence of substrate, Glu-35 is ejected from the active site: this closed-to-open transition significantly widens the substrate-binding channel and precisely positions the scissile 1''-O-linkage for cleavage while securing tightly 2'- and 3'-hydroxyls of ADP-ribose. Functionally, ADP-ribosylhydrolase that preferentially hydrolyzes the scissile alpha-O-linkage attached to the anomeric C1'' position of ADP-ribose and acts on different substrates, such as proteins ADP-ribosylated on serine and threonine, free poly(ADP-ribose) and O-acetyl-ADP-D-ribose. Specifically acts as a serine mono-ADP-ribosylhydrolase by mediating the removal of mono-ADP-ribose attached to serine residues on proteins, thereby playing a key role in DNA damage response. Serine ADP-ribosylation of proteins constitutes the primary form of ADP-ribosylation of proteins in response to DNA damage. Does not hydrolyze ADP-ribosyl-arginine, -cysteine, -diphthamide, or -asparagine bonds. Also able to degrade protein free poly(ADP-ribose), which is synthesized in response to DNA damage: free poly(ADP-ribose) acts as a potent cell death signal and its degradation by ADPRHL2 protects cells from poly(ADP-ribose)-dependent cell death, a process named parthanatos. Also hydrolyzes free poly(ADP-ribose) in mitochondria. Specifically digests O-acetyl-ADP-D-ribose, a product of deacetylation reactions catalyzed by sirtuins. Specifically degrades 1''-O-acetyl-ADP-D-ribose isomer, rather than 2''-O-acetyl-ADP-D-ribose or 3''-O-acetyl-ADP-D-ribose isomers. The chain is ADP-ribosylhydrolase ARH3 (adprs) from Danio rerio (Zebrafish).